The following is a 107-amino-acid chain: Thioredoxin (107 aa).

Positions 2–107 (SVSQVTDASF…LESTLNKYIS (106 aa)) constitute a Thioredoxin domain. Residues Cys31 and Cys34 each act as nucleophile in the active site. Cys31 and Cys34 are joined by a disulfide.

This sequence belongs to the thioredoxin family.

The protein localises to the plastid. The protein resides in the chloroplast. Functionally, participates in various redox reactions through the reversible oxidation of its active center dithiol to a disulfide and catalyzes dithiol-disulfide exchange reactions. The polypeptide is Thioredoxin (trxA) (Porphyra purpurea (Red seaweed)).